Reading from the N-terminus, the 305-residue chain is Serine/threonine-protein phosphatase PP-X isozyme 2 (305 aa).

Mn(2+) contacts are provided by D51, H53, D79, and N111. The active-site Proton donor is H112. The Mn(2+) site is built by H161 and H236.

This sequence belongs to the PPP phosphatase family. PP-4 (PP-X) subfamily. Mn(2+) serves as cofactor. Ubiquitous, mostly expressed in root mersitems, flowers, and vascular tissues.

It is found in the plastid stroma. It carries out the reaction O-phospho-L-seryl-[protein] + H2O = L-seryl-[protein] + phosphate. The catalysed reaction is O-phospho-L-threonyl-[protein] + H2O = L-threonyl-[protein] + phosphate. This is Serine/threonine-protein phosphatase PP-X isozyme 2 (PPX2) from Arabidopsis thaliana (Mouse-ear cress).